The sequence spans 279 residues: Large ribosomal subunit protein uL2 (279 aa).

The tract at residues 223–279 is disordered; sequence VAMNPIDHPHGGGEGRTSGGRHPVTPWGKGTKGTRTRSNKSTDKYILRSRHAKKKGR. The segment covering 269–279 has biased composition (basic residues); that stretch reads LRSRHAKKKGR.

It belongs to the universal ribosomal protein uL2 family. Part of the 50S ribosomal subunit. Forms a bridge to the 30S subunit in the 70S ribosome.

In terms of biological role, one of the primary rRNA binding proteins. Required for association of the 30S and 50S subunits to form the 70S ribosome, for tRNA binding and peptide bond formation. It has been suggested to have peptidyltransferase activity; this is somewhat controversial. Makes several contacts with the 16S rRNA in the 70S ribosome. This chain is Large ribosomal subunit protein uL2, found in Paracoccus denitrificans (strain Pd 1222).